Consider the following 452-residue polypeptide: Chromosomal replication initiator protein DnaA (452 aa).

Positions 1-80 (MSSTVSTLWR…NNDQFMVKIQ (80 aa)) are domain I, interacts with DnaA modulators. The interval 80–114 (QDGIKPTEKTTTNVEQKTQNENCHNEITSQQNYRS) is domain II. Residues 115 to 332 (YLNKNHVFDN…GALNRVHAHA (218 aa)) form a domain III, AAA+ region region. Glycine 160, glycine 162, lysine 163, and threonine 164 together coordinate ATP. Residues 333-452 (EFTGKAITID…WSNLIRTLSV (120 aa)) are domain IV, binds dsDNA.

This sequence belongs to the DnaA family. In terms of assembly, oligomerizes as a right-handed, spiral filament on DNA at oriC.

The protein localises to the cytoplasm. Functionally, plays an essential role in the initiation and regulation of chromosomal replication. ATP-DnaA binds to the origin of replication (oriC) to initiate formation of the DNA replication initiation complex once per cell cycle. Binds the DnaA box (a 9 base pair repeat at the origin) and separates the double-stranded (ds)DNA. Forms a right-handed helical filament on oriC DNA; dsDNA binds to the exterior of the filament while single-stranded (ss)DNA is stabiized in the filament's interior. The ATP-DnaA-oriC complex binds and stabilizes one strand of the AT-rich DNA unwinding element (DUE), permitting loading of DNA polymerase. After initiation quickly degrades to an ADP-DnaA complex that is not apt for DNA replication. Binds acidic phospholipids. The protein is Chromosomal replication initiator protein DnaA of Histophilus somni (strain 129Pt) (Haemophilus somnus).